Here is a 109-residue protein sequence, read N- to C-terminus: Nucleoid-associated protein VC_1055 (109 aa).

Residues 1-22 (MFGKGGMGNLMKQAQQMQERMQ) form a disordered region.

This sequence belongs to the YbaB/EbfC family. In terms of assembly, homodimer.

The protein localises to the cytoplasm. Its subcellular location is the nucleoid. Binds to DNA and alters its conformation. May be involved in regulation of gene expression, nucleoid organization and DNA protection. The polypeptide is Nucleoid-associated protein VC_1055 (Vibrio cholerae serotype O1 (strain ATCC 39315 / El Tor Inaba N16961)).